Here is a 372-residue protein sequence, read N- to C-terminus: Mitogen-activated protein kinase homolog NTF3 (372 aa).

Residues 32–319 enclose the Protein kinase domain; that stretch reads YVPIKPIGRG…VIEALQHPYM (288 aa). Residues 38-46 and lysine 61 contribute to the ATP site; that span reads IGRGAYGIV. Aspartate 158 serves as the catalytic Proton acceptor. Threonine 191 is modified (phosphothreonine). The TXY signature appears at 191 to 193; sequence TEY. Tyrosine 193 is modified (phosphotyrosine).

It belongs to the protein kinase superfamily. CMGC Ser/Thr protein kinase family. MAP kinase subfamily. Mg(2+) serves as cofactor. Dually phosphorylated on Thr-191 and Tyr-193, which activates the enzyme. Very low autophosphorylation, although dramatically increased when Mn(2+) is added to the reaction instead of Mg(2+). In terms of tissue distribution, ubiquitous.

It catalyses the reaction L-seryl-[protein] + ATP = O-phospho-L-seryl-[protein] + ADP + H(+). The enzyme catalyses L-threonyl-[protein] + ATP = O-phospho-L-threonyl-[protein] + ADP + H(+). With respect to regulation, activated by tyrosine and threonine phosphorylation. The sequence is that of Mitogen-activated protein kinase homolog NTF3 (NTF3) from Nicotiana tabacum (Common tobacco).